Consider the following 343-residue polypeptide: 2-alkenal reductase (NADP(+)-dependent) (343 aa).

2 residues coordinate substrate: tyrosine 55 and tyrosine 80. NADP(+) is bound by residues 165–166, glycine 186, lysine 190, tyrosine 206, asparagine 230, cysteine 252, tyrosine 258, 282–284, and asparagine 332; these read AV and FLV.

Belongs to the NADP-dependent oxidoreductase L4BD family. In terms of assembly, homodimer.

It carries out the reaction an n-alkanal + NADP(+) = an alk-2-enal + NADPH + H(+). In terms of biological role, reduces the C=C double bonds of alpha, beta unsaturated enones, but has no activity on enones with an endocyclic C=C double-bond. Shows a high specificity for NADPH as the hybrid donor. Substrates are 1-nitrocyclohexene, 2-methylpentenal, trans-cinnamaldehyde, methyl-trans-2-methylcinnamaldehyde, trans-2-nonenal and 1-octen-3-one. Reduced activity with aplha-methyl transcinnamaldehyde, 1-cyclohexene-1-carboxaldehyde, methyl crotonate, (R)-pulegone, and dimethyl itaconate and no activity with maleimides, citral, (5R)- or (5S)-carvone, (S)-perillyl alcohol, and substituted cyclohexenones and cyclopentenones. May also act as a allyl-alcohol dehydrogenase by catalyzing the dehydrogenation of secondary allylic alcohols rather than saturated secondary alcohols. Allyl-alcohol dehydrogenase is specific for the S-stereoisomer of the alcohols. The sequence is that of 2-alkenal reductase (NADP(+)-dependent) (DBR) from Nicotiana tabacum (Common tobacco).